Consider the following 201-residue polypeptide: Protein FAR-RED-ELONGATED HYPOCOTYL 1-LIKE (201 aa).

The Nuclear localization sequence (NLS) signature appears at 32–35; that stretch reads KKRK. The Nuclear export sequence (NES) motif lies at 43 to 46; the sequence is LLPL.

The protein belongs to the FHY1 protein family. As to quaternary structure, homodimer and heterodimer with FHY1. Interacts with PHYA, especially upon far-red (FR) light illumination. Binds to LAF1 and HFR1. Post-translationally, inactivated by rapid reversible PHYA-mediated phosphorylation.

It is found in the nucleus. The protein resides in the cytoplasm. Can activate transcription. Essential for light-regulated PHYA nuclear accumulation and subsequent PHYA phototropic signaling processes. PHYA-specific signal transducer in response to continuous FR lights. Mediates the association of PHYA with HFR1 and LAF1 in the nucleus in response to FR conditions. Contributes to inhibition of hypocotyl elongation in continuous blue light (B). The protein is Protein FAR-RED-ELONGATED HYPOCOTYL 1-LIKE of Arabidopsis thaliana (Mouse-ear cress).